Reading from the N-terminus, the 457-residue chain is UPF0328 protein ECU05_0030 (457 aa).

Disordered regions lie at residues Met-1 to Thr-112 and Val-157 to Ile-183. Basic and acidic residues predominate over residues His-74–Thr-94. Positions Cys-102–Thr-112 are enriched in pro residues.

It belongs to the UPF0328 family.

The chain is UPF0328 protein ECU05_0030 from Encephalitozoon cuniculi (strain GB-M1) (Microsporidian parasite).